Here is a 504-residue protein sequence, read N- to C-terminus: MRGLRRGLSRLGPRLGPWAVPRSLRRVLRAAGPWRGQSSAGSVSERGGASMEEVLSRSVPLLPPYETKEKAPPPAERRSAEFVRYYRGLEAGSRRAELLGCLARDFGADHGRVAEFSAKVLQAREQEREQGALLQAEDRVRYYLTPRYRALFQHLGRLEGGLRFLVELRGDLVEGLAAKAVDGPHVKEMSGVLKNMLSEWFSTGFLNLERVTWQSPCEVLQKISDSEAVHPVRNWVDLKRRVGPYRRCYFFSHCAIPGEPLIILHVALTSDISSSIQSIVKDVESLETEDAEKITTAIFYSISLAQQGLQGVELGNHLIKRVVKELQKDLPQIEAFSSLSPIPGFTKWLVGLLSSQTKELGRNELFTESERQEISEITEDSTTETLKKLLTNSEWVKSEKLVKALHSPLMRLCAWYLYGEKHRGYALNPVANFHLQNGAELWRINWMGDTSPRGIAASCGMMVNYRYFLEDTASNSAAYLGTKHIKASEQVLSFVSQFQQNSKL.

The N-terminal 50 residues, Met-1 to Ser-50, are a transit peptide targeting the mitochondrion. Residues Met-51 to Phe-201 are alpha-helical domain. The catalytic domain stretch occupies residues Ser-202–Leu-504. Ser-340 (proton acceptor) is an active-site residue. The active-site Proton donor is His-434. Positions Ser-502–Leu-504 match the Microbody targeting signal motif.

The protein resides in the mitochondrion. It localises to the cytoplasm. The protein localises to the peroxisome. The enzyme catalyses malonyl-CoA + H(+) = acetyl-CoA + CO2. It participates in metabolic intermediate biosynthesis; acetyl-CoA biosynthesis; acetyl-CoA from malonyl-CoA: step 1/1. Catalyzes the conversion of malonyl-CoA to acetyl-CoA. In the fatty acid biosynthesis MCD selectively removes malonyl-CoA and thus assures that methyl-malonyl-CoA is the only chain elongating substrate for fatty acid synthase and that fatty acids with multiple methyl side chains are produced. The polypeptide is Malonyl-CoA decarboxylase, mitochondrial (MLYCD) (Anser anser anser (Western greylag goose)).